Consider the following 348-residue polypeptide: Flagellar P-ring protein (348 aa).

The signal sequence occupies residues 1 to 16; sequence MRVLTIFLLFMTSIFA.

It belongs to the FlgI family. The basal body constitutes a major portion of the flagellar organelle and consists of four rings (L,P,S, and M) mounted on a central rod.

The protein resides in the periplasm. Its subcellular location is the bacterial flagellum basal body. Its function is as follows. Assembles around the rod to form the L-ring and probably protects the motor/basal body from shearing forces during rotation. This chain is Flagellar P-ring protein, found in Campylobacter jejuni subsp. jejuni serotype O:6 (strain 81116 / NCTC 11828).